The primary structure comprises 1052 residues: F-box/WD repeat-containing protein 10 (1052 aa).

Residues 169–206 (GLNQDITDVCFSPEKDHSSKSATSQVYWTAKTQHTSLP) form a WD 1 repeat. Positions 276 to 323 (DFIRYLPIHLSKYILRMLDRHTLNKCASVSQHWAAMAQQVKMDLSAHG) constitute an F-box domain. WD repeat units lie at residues 409–447 (SDTW…AIPV), 451–490 (GHAG…CTRI), 493–532 (GHQG…KTFR), 534–569 (KDPI…LVKT), 572–609 (GHEG…ERCL), and 611–652 (AFKH…KVLK). The stretch at 690–719 (YAVEKTKQKKNKEKEEEKEENSLMEILSKC) forms a coiled coil. The interval 766-805 (LQSQGKSKSPRRDADDVEKAQKQGQLETPGKLPSHPKKKS) is disordered. The span at 775-786 (PRRDADDVEKAQ) shows a compositional bias: basic and acidic residues. A coiled-coil region spans residues 986–1010 (VLLTVKEEKEHQEAKMKEYQAREST).

Functionally, probable substrate-recognition component of a SCF (SKP1-CUL1-F-box protein)-type E3 ubiquitin ligase complex which mediates the ubiquitination and subsequent proteasomal degradation of target proteins. Overexpression is leading to degradation of CBX5 and CBX1. The polypeptide is F-box/WD repeat-containing protein 10 (FBXW10) (Homo sapiens (Human)).